The sequence spans 328 residues: Malate dehydrogenase (328 aa).

Residue 11–17 (GAAGQIG) participates in NAD(+) binding. 2 residues coordinate substrate: R94 and R100. Residues N107, Q114, and 131 to 133 (VGN) contribute to the NAD(+) site. N133 and R164 together coordinate substrate. The active-site Proton acceptor is H189.

This sequence belongs to the LDH/MDH superfamily. MDH type 2 family.

It carries out the reaction (S)-malate + NAD(+) = oxaloacetate + NADH + H(+). Catalyzes the reversible oxidation of malate to oxaloacetate. In Xanthomonas euvesicatoria pv. vesicatoria (strain 85-10) (Xanthomonas campestris pv. vesicatoria), this protein is Malate dehydrogenase.